The primary structure comprises 607 residues: Heterocyst differentiation ATP-binding protein HepA (607 aa).

One can recognise an ABC transmembrane type-1 domain in the interval 32 to 330 (AILAVIFSFL…INGTVAFLST (299 aa)). The next 5 membrane-spanning stretches (helical) occupy residues 33 to 53 (ILAV…IGFL), 77 to 97 (ILAA…LILL), 163 to 182 (FSGL…YFVV), 186 to 208 (ISWQ…LSTL), and 290 to 310 (IVIS…FFFV). An ABC transporter domain is found at 364 to 598 (IDLVSVDFGY…RGKLWKYHQM (235 aa)). Residue 397–404 (GASGAGKT) coordinates ATP.

This sequence belongs to the ABC transporter superfamily.

The protein resides in the cell inner membrane. In terms of biological role, acts early in the process of morphological differentiation of heterocysts. The polypeptide is Heterocyst differentiation ATP-binding protein HepA (hepA) (Nostoc sp. (strain PCC 7120 / SAG 25.82 / UTEX 2576)).